The primary structure comprises 371 residues: Protein-glutamate methylesterase/protein-glutamine glutaminase 3 (371 aa).

A Response regulatory domain is found at 5–120 (RVVVIDDSAY…SEEILTIRED (116 aa)). The residue at position 56 (Asp56) is a 4-aspartylphosphate. The 189-residue stretch at 174–362 (PAGRLEVVAI…LDRMSREIIQ (189 aa)) folds into the CheB-type methylesterase domain. Active-site residues include Ser186, His213, and Asp309.

This sequence belongs to the CheB family. Phosphorylated by CheA. Phosphorylation of the N-terminal regulatory domain activates the methylesterase activity.

It is found in the cytoplasm. The catalysed reaction is [protein]-L-glutamate 5-O-methyl ester + H2O = L-glutamyl-[protein] + methanol + H(+). It catalyses the reaction L-glutaminyl-[protein] + H2O = L-glutamyl-[protein] + NH4(+). Its function is as follows. Involved in chemotaxis. Part of a chemotaxis signal transduction system that modulates chemotaxis in response to various stimuli. Catalyzes the demethylation of specific methylglutamate residues introduced into the chemoreceptors (methyl-accepting chemotaxis proteins or MCP) by CheR. Also mediates the irreversible deamidation of specific glutamine residues to glutamic acid. This Geobacter sulfurreducens (strain ATCC 51573 / DSM 12127 / PCA) protein is Protein-glutamate methylesterase/protein-glutamine glutaminase 3.